The sequence spans 499 residues: Cytochrome P450 monooxygenase notH' (499 aa).

The helical transmembrane segment at 11–31 (LGLEPAGWALALLTSSIIYLF) threads the bilayer. Asn296 and Asn427 each carry an N-linked (GlcNAc...) asparagine glycan. Cys440 lines the heme pocket.

It belongs to the cytochrome P450 family. It depends on heme as a cofactor.

Its subcellular location is the membrane. It functions in the pathway alkaloid biosynthesis. In terms of biological role, cytochrome P450 monooxygenase; part of the gene cluster that mediates the biosynthesis of notoamide, a fungal indole alkaloid that belongs to a family of natural products containing a characteristic bicyclo[2.2.2]diazaoctane core. The first step of notoamide biosynthesis involves coupling of L-proline and L-tryptophan by the bimodular NRPS notE', to produce cyclo-L-tryptophan-L-proline called brevianamide F. The reverse prenyltransferase notF' then acts as a deoxybrevianamide E synthase and converts brevianamide F to deoxybrevianamide E via reverse prenylation at C-2 of the indole ring leading to the bicyclo[2.2.2]diazaoctane core. Deoxybrevianamide E is further hydroxylated at C-6 of the indole ring, likely catalyzed by the cytochrome P450 monooxygenase notG', to yield 6-hydroxy-deoxybrevianamide E. 6-hydroxy-deoxybrevianamide E is a specific substrate of the prenyltransferase notC' for normal prenylation at C-7 to produce 6-hydroxy-7-prenyl-deoxybrevianamide, also called notoamide S. As the proposed pivotal branching point in notoamide biosynthesis, notoamide S can be diverted to notoamide E through an oxidative pyran ring closure putatively catalyzed by either notH' cytochrome P450 monooxygenase or the notD' FAD-linked oxidoreductase. This step would be followed by an indole 2,3-epoxidation-initiated pinacol-like rearrangement catalyzed by the notB' FAD-dependent monooxygenase leading to the formation of notoamide C and notoamide D. On the other hand notoamide S is converted to notoamide T by notH' (or notD'), a bifunctional oxidase that also functions as the intramolecular Diels-Alderase responsible for generation of (-)-notoamide T. To generate antipodal (+)-notoaminide T, notH (or notD) in Aspergillus strain MF297-2 is expected to catalyze a Diels-Alder reaction leading to the opposite stereochemistry. The remaining oxidoreductase notD' (or notH') likely catalyzes the oxidative pyran ring formation to yield (-)-stephacidin A. The FAD-dependent monooxygenase notI' is highly similar to notB' and is predicted to catalyze a similar conversion from (-)-stephacidin A to (+)-notoamide B via the 2,3-epoxidation of (-)-stephacidin A followed by a pinacol-type rearrangement. Finally, it remains unclear which enzyme could be responsible for the final hydroxylation steps leading to notoamide A and sclerotiamide. This chain is Cytochrome P450 monooxygenase notH', found in Aspergillus versicolor.